Consider the following 450-residue polypeptide: Probable galactarate/D-glucarate transporter GudP (450 aa).

The Cytoplasmic portion of the chain corresponds to 1-20; it reads MSSLSQAASSVEKRTNARYW. The chain crosses the membrane as a helical span at residues 21–41; it reads IVVMLFIVTSFNYGDRATLSI. The Periplasmic portion of the chain corresponds to 42 to 58; sequence AGSEMAKDIGLDPVGMG. A helical transmembrane segment spans residues 59–79; sequence YVFSAFSWAYVIGQIPGGWLL. The Cytoplasmic segment spans residues 80–85; the sequence is DRFGSK. The helical transmembrane segment at 86–105 threads the bilayer; sequence RVYFWSIFIWSMFTLLQGFV. At 106 to 109 the chain is on the periplasmic side; sequence DIFS. Residues 110-132 form a helical membrane-spanning segment; sequence GFGIIVALFTLRFLVGLAEAPSF. Residues 133–153 lie on the Cytoplasmic side of the membrane; sequence PGNSRIVAAWFPAQERGTAVS. A helical transmembrane segment spans residues 154 to 174; the sequence is IFNSAQYFATVIFAPIMGWLT. Over 175-176 the chain is Periplasmic; the sequence is HE. A helical transmembrane segment spans residues 177–197; sequence VGWSHVFFFMGGLGIVISFIW. The Cytoplasmic portion of the chain corresponds to 198–254; that stretch reads LKVIHEPNQHPGVNKKELEYIAAGGALINMDQQNTKVKVPFSVKWGQIKQLLGSRMM. A helical transmembrane segment spans residues 255–275; it reads IGVYIGQYCINALTYFFITWF. At 276–290 the chain is on the periplasmic side; that stretch reads PVYLVQARGMSILKA. A helical membrane pass occupies residues 291–311; the sequence is GFVASVPAVCGFIGGVLGGII. Over 312 to 329 the chain is Cytoplasmic; it reads SDWLMRRTGSLNIARKTP. The helical transmembrane segment at 330-350 threads the bilayer; that stretch reads IVMGMLLSMVMVFCNYVNVEW. Position 351 (Met-351) is a topological domain, periplasmic. A helical transmembrane segment spans residues 352–372; the sequence is IIGFMALAFFGKGIGALGWAV. Topologically, residues 373-387 are cytoplasmic; the sequence is MADTAPKEISGLSGG. The chain crosses the membrane as a helical span at residues 388-408; that stretch reads LFNMFGNISGIVTPIAIGYIV. Residues 409 to 415 lie on the Periplasmic side of the membrane; the sequence is GTTGSFN. The helical transmembrane segment at 416 to 436 threads the bilayer; sequence GALIYVGVHALIAVLSYLVLV. Over 437 to 450 the chain is Cytoplasmic; the sequence is GDIKRIELKPVAGQ.

The protein belongs to the major facilitator superfamily. Phthalate permease family.

The protein resides in the cell inner membrane. The enzyme catalyses galactarate(in) + H(+)(in) = galactarate(out) + H(+)(out). It carries out the reaction D-glucarate(in) + H(+)(in) = D-glucarate(out) + H(+)(out). It catalyses the reaction (R)-glycerate(in) + H(+)(in) = (R)-glycerate(out) + H(+)(out). Its function is as follows. Probably involved in the uptake of galactarate and/or D-glucarate. May also transport D-glycerate. This is Probable galactarate/D-glucarate transporter GudP from Escherichia coli (strain K12).